Reading from the N-terminus, the 124-residue chain is U33-theraphotoxin-Cg1c (124 aa).

The first 17 residues, 1-17 (MKFAVAIAFTLLVCVFA), serve as a signal peptide directing secretion. 5 cysteine pairs are disulfide-bonded: cysteine 26/cysteine 37, cysteine 31/cysteine 51, cysteine 36/cysteine 75, cysteine 61/cysteine 83, and cysteine 77/cysteine 94. Residues 93 to 108 (RCQEESGKSDKSKESQ) are compositionally biased toward basic and acidic residues. Residues 93–124 (RCQEESGKSDKSKESQGSDESEESEESKESSG) are disordered. Acidic residues predominate over residues 109–118 (GSDESEESEE).

Belongs to the neurotoxin 32 family. Expressed by the venom gland.

Its subcellular location is the secreted. This Chilobrachys guangxiensis (Chinese earth tiger tarantula) protein is U33-theraphotoxin-Cg1c.